A 166-amino-acid polypeptide reads, in one-letter code: Large ribosomal subunit protein uL10 (166 aa).

Part of the ribosomal stalk of the 50S ribosomal subunit. The N-terminus interacts with L11 and 23S rRNA to form the base of the stalk. The C-terminus forms an elongated spine to which L12 dimers bind in a sequential fashion forming a pentameric L10(L12)2(L12)2 complex.

Its function is as follows. Forms part of the ribosomal stalk, playing a central role in the interaction of the ribosome with GTP-bound translation factors (such as IF-2, EF-Tu, EF-G and RF3). The polypeptide is Large ribosomal subunit protein uL10 (rplJ) (Bacillus subtilis (strain 168)).